Consider the following 398-residue polypeptide: Serpin-Z1A (398 aa).

The tract at residues Gly-343–Phe-367 is RCL.

Belongs to the serpin family.

Functionally, inhibits chymotrypsin and cathepsin G in vitro. The sequence is that of Serpin-Z1A (WZCI) from Triticum aestivum (Wheat).